The sequence spans 659 residues: ATP-binding cassette sub-family D member 3 (659 aa).

An interaction with PEX19 region spans residues 1-61 (MAAFSKYLTA…GKKERAVVDK (61 aa)). N-linked (GlcNAc...) asparagine glycosylation is present at Asn12. Position 61 is an N6-acetyllysine (Lys61). Residues 84–104 (GYLLLIAVMLVSRTYCDVWMI) form a helical membrane-spanning segment. An ABC transmembrane type-1 domain is found at 85 to 372 (YLLLIAVMLV…MLLRMSQALG (288 aa)). N-linked (GlcNAc...) asparagine glycosylation is present at Asn106. Residues 126–146 (LFNFIAAMPLISLVNNFLKYG) form a helical membrane-spanning segment. N-linked (GlcNAc...) asparagine glycosylation is present at Asn206. The helical transmembrane segment at 224–244 (AIGAQGPASMMAYLLVSGLFL) threads the bilayer. An N6-acetyllysine modification is found at Lys260. Residues 313-333 (MGFIDSIIAKYVATVVGYLVV) traverse the membrane as a helical segment. Lys399 carries the post-translational modification N6-acetyllysine. A Phosphoserine modification is found at Ser424. An ABC transporter domain is found at 434 to 659 (INTDNIIKFD…ITEDTVEFGS (226 aa)). An ATP-binding site is contributed by 473 to 480 (GPNGCGKS). N6-acetyllysine is present on Lys533. Phosphoserine is present on Ser659.

The protein belongs to the ABC transporter superfamily. ABCD family. Peroxisomal fatty acyl CoA transporter (TC 3.A.1.203) subfamily. As to quaternary structure, homodimers. Can form heterodimers with ABCD1 and ABCD2. Dimerization is necessary to form an active transporter. Interacts with PEX19; mediates the targeting of ABCD3 to peroxisomes. Ubiquitinated by PEX2 during pexophagy in response to starvation, leading to its degradation.

The protein resides in the peroxisome membrane. It carries out the reaction a very long-chain fatty acyl-CoA + H2O = a very long-chain fatty acid + CoA + H(+). It catalyses the reaction a very long-chain fatty acid(in) + ATP + H2O = a very long-chain fatty acid(out) + ADP + phosphate + H(+). The enzyme catalyses a long-chain fatty acyl-CoA + H2O = a long-chain fatty acid + CoA + H(+). The catalysed reaction is a long-chain fatty acid(in) + ATP + H2O = a long-chain fatty acid(out) + ADP + phosphate + H(+). It carries out the reaction pristanoyl-CoA + H2O = 2,6,10,14-tetramethylpentadecanoate + CoA + H(+). It catalyses the reaction 2,6,10,14-tetramethylpentadecanoate(in) + ATP + H2O = 2,6,10,14-tetramethylpentadecanoate(out) + ADP + phosphate + H(+). The enzyme catalyses hexadecanedioyl-CoA + H2O = hexadecanedioate + CoA + H(+). The catalysed reaction is hexadecanedioate(in) + ATP + H2O = hexadecanedioate(out) + ADP + phosphate + H(+). It carries out the reaction (5Z,8Z,11Z,14Z,17Z)-eicosapentaenoyl-CoA + H2O = (5Z,8Z,11Z,14Z,17Z)-eicosapentaenoate + CoA + H(+). It catalyses the reaction (5Z,8Z,11Z,14Z,17Z)-eicosapentaenoate(in) + ATP + H2O = (5Z,8Z,11Z,14Z,17Z)-eicosapentaenoate(out) + ADP + phosphate + H(+). The enzyme catalyses (4Z,7Z,10Z,13Z,16Z,19Z)-docosahexaenoyl-CoA + H2O = (4Z,7Z,10Z,13Z,16Z,19Z)-docosahexaenoate + CoA + H(+). The catalysed reaction is (4Z,7Z,10Z,13Z,16Z,19Z)-docosahexaenoate(in) + ATP + H2O = (4Z,7Z,10Z,13Z,16Z,19Z)-docosahexaenoate(out) + ADP + phosphate + H(+). In terms of biological role, broad substrate specificity ATP-dependent transporter of the ATP-binding cassette (ABC) family that catalyzes the transport of long-chain fatty acids (LCFA)-CoA, dicarboxylic acids-CoA, long-branched-chain fatty acids-CoA and bile acids from the cytosol to the peroxisome lumen for beta-oxydation. Has fatty acyl-CoA thioesterase and ATPase activities. Probably hydrolyzes fatty acyl-CoAs into free fatty acids prior to their ATP-dependent transport into peroxisomes. Thus, play a role in regulation of LCFAs and energy metabolism namely, in the degradation and biosynthesis of fatty acids by beta-oxidation. The chain is ATP-binding cassette sub-family D member 3 (Abcd3) from Mus musculus (Mouse).